The following is a 759-amino-acid chain: uncharacterized protein (759 aa).

Disordered stretches follow at residues 269–328 (SQRV…GEEP) and 406–759 (LPLR…AQTA). The span at 289 to 299 (AGGKEEAERGG) shows a compositional bias: basic and acidic residues. The segment covering 406-415 (LPLRPPSGSG) has biased composition (low complexity). The span at 417–430 (AARKPGYEKEEGRG) shows a compositional bias: basic and acidic residues. Residues 431–444 (RATTASATAATSPR) are compositionally biased toward low complexity. Basic and acidic residues-rich tracts occupy residues 469-518 (PESE…RGEH) and 525-545 (DSGR…EKGT). The span at 585-599 (WVPPPHLLFPSPLPS) shows a compositional bias: pro residues. A compositionally biased stretch (low complexity) spans 659 to 680 (SLSSLSSSSSSSSSSSPSYSPS). The segment covering 681 to 690 (PLSPPSPVSP) has biased composition (pro residues). Low complexity-rich tracts occupy residues 691–704 (SSPR…IRSP) and 728–746 (PPFS…PSAP).

This is an uncharacterized protein from Human herpesvirus 6B (strain Z29) (HHV-6 variant B).